We begin with the raw amino-acid sequence, 68 residues long: DNA-directed RNA polymerase subunit omega (68 aa).

The protein belongs to the RNA polymerase subunit omega family. In terms of assembly, the RNAP catalytic core consists of 2 alpha, 1 beta, 1 beta' and 1 omega subunit. When a sigma factor is associated with the core the holoenzyme is formed, which can initiate transcription.

The catalysed reaction is RNA(n) + a ribonucleoside 5'-triphosphate = RNA(n+1) + diphosphate. Its function is as follows. Promotes RNA polymerase assembly. Latches the N- and C-terminal regions of the beta' subunit thereby facilitating its interaction with the beta and alpha subunits. This chain is DNA-directed RNA polymerase subunit omega, found in Dechloromonas aromatica (strain RCB).